Reading from the N-terminus, the 289-residue chain is Thymidylate synthase (289 aa).

Residues Arg-21 and 150-151 (RR) contribute to the dUMP site. Residue Cys-170 is the Nucleophile of the active site. DUMP is bound by residues 191 to 194 (RSGD), Asn-202, and 232 to 234 (HIY). Asp-194 lines the (6R)-5,10-methylene-5,6,7,8-tetrahydrofolate pocket. Position 288 (Ala-288) interacts with (6R)-5,10-methylene-5,6,7,8-tetrahydrofolate.

The protein belongs to the thymidylate synthase family. Bacterial-type ThyA subfamily. In terms of assembly, homodimer.

The protein resides in the cytoplasm. It catalyses the reaction dUMP + (6R)-5,10-methylene-5,6,7,8-tetrahydrofolate = 7,8-dihydrofolate + dTMP. It participates in pyrimidine metabolism; dTTP biosynthesis. Functionally, catalyzes the reductive methylation of 2'-deoxyuridine-5'-monophosphate (dUMP) to 2'-deoxythymidine-5'-monophosphate (dTMP) while utilizing 5,10-methylenetetrahydrofolate (mTHF) as the methyl donor and reductant in the reaction, yielding dihydrofolate (DHF) as a by-product. This enzymatic reaction provides an intracellular de novo source of dTMP, an essential precursor for DNA biosynthesis. This Mycoplasmopsis synoviae (strain 53) (Mycoplasma synoviae) protein is Thymidylate synthase.